A 284-amino-acid polypeptide reads, in one-letter code: BES1/BZR1 homolog protein 3 (284 aa).

Disordered regions lie at residues 1 to 21 (MTSG…RRER) and 85 to 116 (GSTS…PSPT). Residues 6-88 (RTPTWKEREN…RMDLMNGSTS (83 aa)) form a required for DNA-binding region. Residues 85–97 (GSTSASPCSSYQH) are compositionally biased toward polar residues. A compositionally biased stretch (low complexity) spans 98 to 114 (SPRASYNPSPSSSSFPS). Thr153 is subject to Phosphothreonine.

It belongs to the BZR/LAT61 family. Phosphorylated. Phosphorylation increases protein degradation.

The chain is BES1/BZR1 homolog protein 3 (BEH3) from Arabidopsis thaliana (Mouse-ear cress).